Consider the following 218-residue polypeptide: Large ribosomal subunit protein uL3 (218 aa).

It belongs to the universal ribosomal protein uL3 family. Part of the 50S ribosomal subunit. Forms a cluster with proteins L14 and L19.

One of the primary rRNA binding proteins, it binds directly near the 3'-end of the 23S rRNA, where it nucleates assembly of the 50S subunit. The chain is Large ribosomal subunit protein uL3 from Brachyspira pilosicoli (Serpulina pilosicoli).